Here is a 259-residue protein sequence, read N- to C-terminus: Imidazole glycerol phosphate synthase subunit HisF (259 aa).

Catalysis depends on residues Asp-11 and Asp-130.

It belongs to the HisA/HisF family. In terms of assembly, heterodimer of HisH and HisF.

Its subcellular location is the cytoplasm. The catalysed reaction is 5-[(5-phospho-1-deoxy-D-ribulos-1-ylimino)methylamino]-1-(5-phospho-beta-D-ribosyl)imidazole-4-carboxamide + L-glutamine = D-erythro-1-(imidazol-4-yl)glycerol 3-phosphate + 5-amino-1-(5-phospho-beta-D-ribosyl)imidazole-4-carboxamide + L-glutamate + H(+). The protein operates within amino-acid biosynthesis; L-histidine biosynthesis; L-histidine from 5-phospho-alpha-D-ribose 1-diphosphate: step 5/9. Functionally, IGPS catalyzes the conversion of PRFAR and glutamine to IGP, AICAR and glutamate. The HisF subunit catalyzes the cyclization activity that produces IGP and AICAR from PRFAR using the ammonia provided by the HisH subunit. The polypeptide is Imidazole glycerol phosphate synthase subunit HisF (Nitratidesulfovibrio vulgaris (strain DP4) (Desulfovibrio vulgaris)).